A 446-amino-acid chain; its full sequence is Scytalone dehydratase-like protein Arp1 (446 aa).

Substrate is bound at residue Tyr323. Active-site residues include His358 and His383. Asn404 contributes to the substrate binding site.

The protein belongs to the scytalone dehydratase family. In terms of assembly, homotrimer. Each subunit contains an active site, located in the central part of the hydrophobic core of the monomer, which functions independently.

Scytalone dehydratase-like protein; part of the Pks2 gene cluster that mediates the formation of infectious structures (appressoria), enabling these fungi to kill insects faster. The product of the Pks2 gene cluster is different from the one of Pks1 and has still not been identified. This is Scytalone dehydratase-like protein Arp1 from Metarhizium acridum (strain CQMa 102).